A 105-amino-acid polypeptide reads, in one-letter code: Met repressor (105 aa).

This sequence belongs to the MetJ family. Homodimer.

The protein localises to the cytoplasm. This regulatory protein, when combined with SAM (S-adenosylmethionine) represses the expression of the methionine regulon and of enzymes involved in SAM synthesis. This Citrobacter koseri (strain ATCC BAA-895 / CDC 4225-83 / SGSC4696) protein is Met repressor.